The primary structure comprises 418 residues: Arginine deiminase (418 aa).

C406 acts as the Amidino-cysteine intermediate in catalysis.

It belongs to the arginine deiminase family.

Its subcellular location is the cytoplasm. It carries out the reaction L-arginine + H2O = L-citrulline + NH4(+). The protein operates within amino-acid degradation; L-arginine degradation via ADI pathway; carbamoyl phosphate from L-arginine: step 1/2. The chain is Arginine deiminase from Lentilactobacillus hilgardii (Lactobacillus hilgardii).